Reading from the N-terminus, the 63-residue chain is Large ribosomal subunit protein uL29 (63 aa).

The protein belongs to the universal ribosomal protein uL29 family.

The polypeptide is Large ribosomal subunit protein uL29 (Listeria innocua serovar 6a (strain ATCC BAA-680 / CLIP 11262)).